Consider the following 292-residue polypeptide: Zinc metalloproteinase nas-3 (292 aa).

An N-terminal signal peptide occupies residues 1-16 (MYRFIIFFSLLALTAS). Residues 56–249 (RGIAIHPWQW…RNINTLYKCN (194 aa)) form the Peptidase M12A domain. 2 disulfides stabilise this stretch: cysteine 103-cysteine 248 and cysteine 128-cysteine 158. Histidine 169 serves as a coordination point for Zn(2+). Residue glutamate 170 is part of the active site. The Zn(2+) site is built by histidine 173 and histidine 179.

Zn(2+) is required as a cofactor.

The protein resides in the secreted. Its function is as follows. Metalloprotease. This Caenorhabditis elegans protein is Zinc metalloproteinase nas-3 (nas-3).